Consider the following 1325-residue polypeptide: Protein PHYTOCHROME-DEPENDENT LATE-FLOWERING (1325 aa).

Polar residues-rich tracts occupy residues 313 to 331 (IGSTRNTQDQGSNSVSVSG) and 504 to 515 (NFPQTSWNVNPG). Disordered regions lie at residues 313–371 (IGST…MPGL), 462–558 (EPFE…EFSG), 593–616 (ANEAMQQRQHQAQMAAKRRTNSLP), 852–875 (VAGQASGEASKHGNTGNTPNNSTQ), and 1160–1325 (QQQQ…GNNS). Residues 518–529 (IEKEPKKEEQFS) are compositionally biased toward basic and acidic residues. Over residues 596 to 607 (AMQQRQHQAQMA) the composition is skewed to low complexity. Over residues 863-875 (HGNTGNTPNNSTQ) the composition is skewed to polar residues. The span at 1160–1224 (QQQQQQQLQQ…QQQATASPLQ (65 aa)) shows a compositional bias: low complexity. Positions 1225-1239 (SVLSPPQVGSPSAGI) are enriched in polar residues. Positions 1240–1262 (TQQQLQQSSPQQMSQRTPMSPQQ) are enriched in low complexity. Polar residues-rich tracts occupy residues 1263–1286 (VNQRTPMSPQISSGAMHPMSTSNL) and 1293–1325 (PQLSSQTMGSVGSITNSPMELQGPKNNSAGNNS).

In terms of assembly, component of a red light-dependent nuclear complex made of PHL, PHYB and CO. Interacts directly with PHYB and CO; CO binding requires the presence of PHYB. In terms of tissue distribution, mostly expressed in cotyledons and leaves, both in mesophyll and vasculature cells. Also present in roots, hypocotyls and shoot apices.

Its subcellular location is the nucleus. It localises to the nuclear body. The protein localises to the cytoplasmic granule. The protein resides in the cytoplasm. Functionally, triggers photoperiod-monitored flowering by repressing PHYB-dependent flowering negative regulation, probably through physical interactions with PHYB and CO. The protein is Protein PHYTOCHROME-DEPENDENT LATE-FLOWERING of Arabidopsis thaliana (Mouse-ear cress).